Reading from the N-terminus, the 98-residue chain is Integration host factor subunit alpha (98 aa).

The protein belongs to the bacterial histone-like protein family. As to quaternary structure, heterodimer of an alpha and a beta chain.

In terms of biological role, this protein is one of the two subunits of integration host factor, a specific DNA-binding protein that functions in genetic recombination as well as in transcriptional and translational control. The polypeptide is Integration host factor subunit alpha (Idiomarina loihiensis (strain ATCC BAA-735 / DSM 15497 / L2-TR)).